Consider the following 150-residue polypeptide: Flagellar assembly factor FliW (150 aa).

Belongs to the FliW family. Interacts with translational regulator CsrA and flagellin(s).

The protein localises to the cytoplasm. Its function is as follows. Acts as an anti-CsrA protein, binds CsrA and prevents it from repressing translation of its target genes, one of which is flagellin. Binds to flagellin and participates in the assembly of the flagellum. The chain is Flagellar assembly factor FliW from Leptospira interrogans serogroup Icterohaemorrhagiae serovar Lai (strain 56601).